The sequence spans 281 residues: ATP synthase gamma chain (281 aa).

Belongs to the ATPase gamma chain family. As to quaternary structure, F-type ATPases have 2 components, CF(1) - the catalytic core - and CF(0) - the membrane proton channel. CF(1) has five subunits: alpha(3), beta(3), gamma(1), delta(1), epsilon(1). CF(0) has three main subunits: a, b and c.

It is found in the cell inner membrane. Its function is as follows. Produces ATP from ADP in the presence of a proton gradient across the membrane. The gamma chain is believed to be important in regulating ATPase activity and the flow of protons through the CF(0) complex. This Ehrlichia chaffeensis (strain ATCC CRL-10679 / Arkansas) protein is ATP synthase gamma chain.